Reading from the N-terminus, the 48-residue chain is ATP synthase protein 8 (48 aa).

A helical transmembrane segment spans residues 13 to 32 (LVYGFALVTILLVLFAQYFL).

It belongs to the ATPase protein 8 family. As to quaternary structure, F-type ATPases have 2 components, CF(1) - the catalytic core - and CF(0) - the membrane proton channel.

It localises to the mitochondrion membrane. Functionally, mitochondrial membrane ATP synthase (F(1)F(0) ATP synthase or Complex V) produces ATP from ADP in the presence of a proton gradient across the membrane which is generated by electron transport complexes of the respiratory chain. F-type ATPases consist of two structural domains, F(1) - containing the extramembraneous catalytic core and F(0) - containing the membrane proton channel, linked together by a central stalk and a peripheral stalk. During catalysis, ATP synthesis in the catalytic domain of F(1) is coupled via a rotary mechanism of the central stalk subunits to proton translocation. Part of the complex F(0) domain. Minor subunit located with subunit a in the membrane. In Kluyveromyces lactis (strain ATCC 8585 / CBS 2359 / DSM 70799 / NBRC 1267 / NRRL Y-1140 / WM37) (Yeast), this protein is ATP synthase protein 8 (ATP8).